We begin with the raw amino-acid sequence, 308 residues long: Probable D,D-dipeptide transport ATP-binding protein DdpF (308 aa).

One can recognise an ABC transporter domain in the interval 8–243 (LRDVHINFPA…PAHPYTRLLL (236 aa)). 49–56 (GESGCGKS) provides a ligand contact to ATP.

This sequence belongs to the ABC transporter superfamily. As to quaternary structure, the complex is composed of two ATP-binding proteins (DdpD and DdpF), two transmembrane proteins (DdpB and DdpC) and a solute-binding protein (DdpA).

Its subcellular location is the cell inner membrane. In terms of biological role, part of the ABC transporter complex DdpABCDF, which is probably involved in D,D-dipeptide transport. Probably responsible for energy coupling to the transport system. This chain is Probable D,D-dipeptide transport ATP-binding protein DdpF, found in Escherichia coli (strain K12).